The primary structure comprises 214 residues: Cytolysin tenebrosin-B (214 aa).

An N-terminal signal peptide occupies residues 1–19 (MNRLIIVFIVVTMICAATA). Positions 20-35 (LSTKRRINKEEKDEKR) are excised as a propeptide. The tract at residues 38–47 (AVAGAVIEGA) is plays an important role in the hemolytic activity. The segment at 46 to 65 (GATLTFNVLQTVLKALGDIS) is N-terminal region. Residues Ser89, Val122, Ser140, Pro142, Tyr168, Tyr172, and Tyr173 each contribute to the phosphocholine site. Residues 140 to 155 (SIPFDYNLYSNWWNVK) are trp-rich region, which is important for the binding to lipid membrane. The Cell attachment site, crucial for protein stability motif lies at 179-181 (RGD).

Belongs to the actinoporin family. Sea anemone subfamily. Octamer or nonamer in membranes. Monomer in the soluble state.

Its subcellular location is the secreted. The protein resides in the nematocyst. The protein localises to the target cell membrane. Its function is as follows. Pore-forming protein that forms cations-selective hydrophilic pores of around 1 nm and causes cardiac stimulation and cytolysis. Pore formation is a multi-step process that involves specific recognition of membrane sphingomyelin (but neither cholesterol nor phosphatidylcholine) using aromatic rich region and adjacent phosphocholine (POC) binding site, firm binding to the membrane (mainly driven by hydrophobic interactions) accompanied by the transfer of the N-terminal region to the lipid-water interface and finally pore formation after oligomerization of monomers. The sequence is that of Cytolysin tenebrosin-B from Actinia tenebrosa (Australian red waratah sea anemone).